We begin with the raw amino-acid sequence, 226 residues long: ATP synthase subunit a (226 aa).

5 consecutive transmembrane segments (helical) span residues 20–40, 74–94, 100–120, 162–182, and 187–207; these read LNWFSTFIGLLIIPSTFWLMP, FVSLFSLIMFNNFLGLFPYIF, LTLTLTLAFPLWLSFMLYGWI, LTANMIAGHLLMTLLGNTGPM, and IILSMILITQIALLVLESAVA.

Belongs to the ATPase A chain family. As to quaternary structure, F-type ATPases have 2 components, CF(1) - the catalytic core - and CF(0) - the membrane proton channel. CF(1) has five subunits: alpha(3), beta(3), gamma(1), delta(1), epsilon(1). CF(0) has three main subunits: a, b and c.

It is found in the mitochondrion inner membrane. Its function is as follows. Mitochondrial membrane ATP synthase (F(1)F(0) ATP synthase or Complex V) produces ATP from ADP in the presence of a proton gradient across the membrane which is generated by electron transport complexes of the respiratory chain. F-type ATPases consist of two structural domains, F(1) - containing the extramembraneous catalytic core and F(0) - containing the membrane proton channel, linked together by a central stalk and a peripheral stalk. During catalysis, ATP synthesis in the catalytic domain of F(1) is coupled via a rotary mechanism of the central stalk subunits to proton translocation. Key component of the proton channel; it may play a direct role in the translocation of protons across the membrane. This is ATP synthase subunit a (mt:ATPase6) from Aedes albopictus (Asian tiger mosquito).